The following is a 655-amino-acid chain: tRNA-guanine(15) transglycosylase (655 aa).

The active-site Nucleophile is Asp89. Residues Asp124 and Ala195 each coordinate substrate. Zn(2+) is bound by residues Cys281, Cys283, and Cys286. The PUA domain maps to 577–652 (KYRVVVNKEA…LAVKVRGGLK (76 aa)).

Belongs to the archaeosine tRNA-ribosyltransferase family. Requires Zn(2+) as cofactor.

It carries out the reaction guanosine(15) in tRNA + 7-cyano-7-deazaguanine = 7-cyano-7-carbaguanosine(15) in tRNA + guanine. The protein operates within tRNA modification; archaeosine-tRNA biosynthesis. Exchanges the guanine residue with 7-cyano-7-deazaguanine (preQ0) at position 15 in the dihydrouridine loop (D-loop) of archaeal tRNAs. Can also utilize guanine as substrate. In Methanocaldococcus jannaschii (strain ATCC 43067 / DSM 2661 / JAL-1 / JCM 10045 / NBRC 100440) (Methanococcus jannaschii), this protein is tRNA-guanine(15) transglycosylase.